The chain runs to 175 residues: Large ribosomal subunit protein uL6 (175 aa).

This sequence belongs to the universal ribosomal protein uL6 family. Part of the 50S ribosomal subunit.

Its function is as follows. This protein binds to the 23S rRNA, and is important in its secondary structure. It is located near the subunit interface in the base of the L7/L12 stalk, and near the tRNA binding site of the peptidyltransferase center. In Xanthomonas axonopodis pv. citri (strain 306), this protein is Large ribosomal subunit protein uL6.